The primary structure comprises 226 residues: Urease accessory protein UreF (226 aa).

This sequence belongs to the UreF family. UreD, UreF and UreG form a complex that acts as a GTP-hydrolysis-dependent molecular chaperone, activating the urease apoprotein by helping to assemble the nickel containing metallocenter of UreC. The UreE protein probably delivers the nickel.

Its subcellular location is the cytoplasm. Functionally, required for maturation of urease via the functional incorporation of the urease nickel metallocenter. The protein is Urease accessory protein UreF of Janthinobacterium sp. (strain Marseille) (Minibacterium massiliensis).